The primary structure comprises 206 residues: Large ribosomal subunit protein uL4 (206 aa).

This sequence belongs to the universal ribosomal protein uL4 family. Part of the 50S ribosomal subunit.

Its function is as follows. One of the primary rRNA binding proteins, this protein initially binds near the 5'-end of the 23S rRNA. It is important during the early stages of 50S assembly. It makes multiple contacts with different domains of the 23S rRNA in the assembled 50S subunit and ribosome. Forms part of the polypeptide exit tunnel. This is Large ribosomal subunit protein uL4 from Methylorubrum extorquens (strain CM4 / NCIMB 13688) (Methylobacterium extorquens).